A 208-amino-acid polypeptide reads, in one-letter code: ATP-dependent Clp protease proteolytic subunit (208 aa).

Ser107 serves as the catalytic Nucleophile. His132 is an active-site residue.

It belongs to the peptidase S14 family. Fourteen ClpP subunits assemble into 2 heptameric rings which stack back to back to give a disk-like structure with a central cavity, resembling the structure of eukaryotic proteasomes.

It localises to the cytoplasm. The enzyme catalyses Hydrolysis of proteins to small peptides in the presence of ATP and magnesium. alpha-casein is the usual test substrate. In the absence of ATP, only oligopeptides shorter than five residues are hydrolyzed (such as succinyl-Leu-Tyr-|-NHMec, and Leu-Tyr-Leu-|-Tyr-Trp, in which cleavage of the -Tyr-|-Leu- and -Tyr-|-Trp bonds also occurs).. Cleaves peptides in various proteins in a process that requires ATP hydrolysis. Has a chymotrypsin-like activity. Plays a major role in the degradation of misfolded proteins. The protein is ATP-dependent Clp protease proteolytic subunit of Jannaschia sp. (strain CCS1).